The sequence spans 67 residues: Large ribosomal subunit protein bL35 (67 aa).

Belongs to the bacterial ribosomal protein bL35 family.

In Mesorhizobium japonicum (strain LMG 29417 / CECT 9101 / MAFF 303099) (Mesorhizobium loti (strain MAFF 303099)), this protein is Large ribosomal subunit protein bL35.